A 466-amino-acid chain; its full sequence is MKTNQSWGGRFAEGPKEAVAQYTDSQSYDRALYAQDIRASQAHARMLGRQGVITPEEAQLLVEGLDRVREEIRSDSFIWKPELEDVHMNIEARLTEIMGNVGKKLHTGRSRNDQVGLSFRLFVADRLETWRQRAAALCAILVQRATEHAGDILPGCTHLQPAQPVSLAHHLLAYAWMFRRDAMRLGDCLDRVRISPLGAAALAGTTYPLDPQSVAKDVGFDGIYGNSMDAVSDRDFVLEALFGGSTIMMHLSRLCEEIILWANPAFGFVRLPDSYSTGSSIMPQKKNPDVAELMRGKTGRVYGSLMGMLTIMKGLPLAYNRDMQEDKEGFLDADRTVEASLRLMAGMMEEIAFRTDRMREACKAGFLNATELADYLVGKGLPFREAHHVTGQCVAAAEKQAKGLEDLTLPEMQALEPRIGEDVYAILDYAAAVQRRETPGGTGPQSVAAQVAQLRTWLAGMDGMVQ.

It belongs to the lyase 1 family. Argininosuccinate lyase subfamily.

Its subcellular location is the cytoplasm. It catalyses the reaction 2-(N(omega)-L-arginino)succinate = fumarate + L-arginine. Its pathway is amino-acid biosynthesis; L-arginine biosynthesis; L-arginine from L-ornithine and carbamoyl phosphate: step 3/3. The protein is Argininosuccinate lyase of Desulfovibrio desulfuricans (strain ATCC 27774 / DSM 6949 / MB).